Here is a 112-residue protein sequence, read N- to C-terminus: Nucleoid-associated protein CA_C0126 (112 aa).

A compositionally biased stretch (basic and acidic residues) spans 93-102 (EEETSGEMKK). Residues 93 to 112 (EEETSGEMKKLTGGLNIPGL) form a disordered region.

Belongs to the YbaB/EbfC family. As to quaternary structure, homodimer.

The protein resides in the cytoplasm. It is found in the nucleoid. In terms of biological role, binds to DNA and alters its conformation. May be involved in regulation of gene expression, nucleoid organization and DNA protection. This Clostridium acetobutylicum (strain ATCC 824 / DSM 792 / JCM 1419 / IAM 19013 / LMG 5710 / NBRC 13948 / NRRL B-527 / VKM B-1787 / 2291 / W) protein is Nucleoid-associated protein CA_C0126.